Here is a 236-residue protein sequence, read N- to C-terminus: 2,3,4,5-tetrahydropyridine-2,6-dicarboxylate N-acetyltransferase (236 aa).

The protein belongs to the transferase hexapeptide repeat family. DapH subfamily.

The catalysed reaction is (S)-2,3,4,5-tetrahydrodipicolinate + acetyl-CoA + H2O = L-2-acetamido-6-oxoheptanedioate + CoA. Its pathway is amino-acid biosynthesis; L-lysine biosynthesis via DAP pathway; LL-2,6-diaminopimelate from (S)-tetrahydrodipicolinate (acetylase route): step 1/3. Catalyzes the transfer of an acetyl group from acetyl-CoA to tetrahydrodipicolinate. This Bacillus pumilus (strain SAFR-032) protein is 2,3,4,5-tetrahydropyridine-2,6-dicarboxylate N-acetyltransferase.